The sequence spans 263 residues: Rano class II histocompatibility antigen, B-1 beta chain (263 aa).

The signal sequence occupies residues 1-27 (MALQTPSFLLPAAVVVLMVLSSPGTEG). The tract at residues 28–120 (RDSPRDFVYQ…SEVRTSLRRL (93 aa)) is beta-1. At 28-224 (RDSPRDFVYQ…RAQSESAQSK (197 aa)) the chain is on the extracellular side. 2 disulfide bridges follow: cysteine 42-cysteine 104 and cysteine 143-cysteine 199. The N-linked (GlcNAc...) asparagine glycan is linked to asparagine 46. Positions 121–214 (EQPNVAISLS…SLESPVTVEW (94 aa)) are beta-2. The Ig-like C1-type domain maps to 123–211 (PNVAISLSRT…DHPSLESPVT (89 aa)). The connecting peptide stretch occupies residues 215–224 (RAQSESAQSK). The helical transmembrane segment at 225 to 245 (MLSGIGGFVLGVIFLGLGLFI) threads the bilayer. The Cytoplasmic portion of the chain corresponds to 246 to 263 (RHKRQKGPRGPPPAGLLQ). Residue lysine 251 forms a Glycyl lysine isopeptide (Lys-Gly) (interchain with G-Cter in ubiquitin) linkage.

The protein belongs to the MHC class II family.

It is found in the membrane. Functionally, involved in the presentation of foreign antigens to the immune system. The polypeptide is Rano class II histocompatibility antigen, B-1 beta chain (RT1-Bb) (Rattus norvegicus (Rat)).